Here is a 134-residue protein sequence, read N- to C-terminus: DNA-directed RNA polymerase subunit omega (134 aa).

It belongs to the RNA polymerase subunit omega family. The RNAP catalytic core consists of 2 alpha, 1 beta, 1 beta' and 1 omega subunit. When a sigma factor is associated with the core the holoenzyme is formed, which can initiate transcription.

The enzyme catalyses RNA(n) + a ribonucleoside 5'-triphosphate = RNA(n+1) + diphosphate. Its function is as follows. Promotes RNA polymerase assembly. Latches the N- and C-terminal regions of the beta' subunit thereby facilitating its interaction with the beta and alpha subunits. In Rhizobium etli (strain CIAT 652), this protein is DNA-directed RNA polymerase subunit omega.